The sequence spans 269 residues: MRAVDFLRRATVCWYMRIYLASNNAHKHAEFSSLFPMHTILLPKDEGIDFFSPEDGSTFFANARQKADALYDVVHAPVLADDSGLCVDALDGDPGVHSARFGAQHGVHTDTARMQLLLERMHGRQDRACSFVCVAVLKLGSVPLCVGRGVCRGVLTTEMSGVEGFGYDPIFLLPHLGRTFAQLSIEEKNRVSHRALAALRLAQVLAMMQLPRALRYELKLLRGARRMTRGGVLRPGAPCAQRKGQTAQTARRHKFYARARRCARRIHRA.

Substrate is bound at residue 22–27 (SNNAHK). Asp82 serves as the catalytic Proton acceptor. Residue Asp82 coordinates Mg(2+). Substrate contacts are provided by residues Ser83, 165 to 168 (FGYD), Lys188, and 193 to 194 (HR).

The protein belongs to the HAM1 NTPase family. As to quaternary structure, homodimer. It depends on Mg(2+) as a cofactor.

It carries out the reaction XTP + H2O = XMP + diphosphate + H(+). It catalyses the reaction dITP + H2O = dIMP + diphosphate + H(+). The enzyme catalyses ITP + H2O = IMP + diphosphate + H(+). In terms of biological role, pyrophosphatase that catalyzes the hydrolysis of nucleoside triphosphates to their monophosphate derivatives, with a high preference for the non-canonical purine nucleotides XTP (xanthosine triphosphate), dITP (deoxyinosine triphosphate) and ITP. Seems to function as a house-cleaning enzyme that removes non-canonical purine nucleotides from the nucleotide pool, thus preventing their incorporation into DNA/RNA and avoiding chromosomal lesions. This Treponema pallidum (strain Nichols) protein is dITP/XTP pyrophosphatase.